A 336-amino-acid chain; its full sequence is Dihydroorotate dehydrogenase (quinone) (336 aa).

FMN-binding positions include 62 to 66 and T86; that span reads AGLDK. Residue K66 participates in substrate binding. A substrate-binding site is contributed by 111–115; that stretch reads NRMGF. The FMN site is built by N139 and N172. Substrate is bound at residue N172. The active-site Nucleophile is the S175. Position 177 (N177) interacts with substrate. 2 residues coordinate FMN: K217 and T245. Position 246–247 (246–247) interacts with substrate; it reads NT. FMN contacts are provided by residues G268, G297, and 318–319; that span reads YS.

This sequence belongs to the dihydroorotate dehydrogenase family. Type 2 subfamily. As to quaternary structure, monomer. The cofactor is FMN.

It localises to the cell membrane. The enzyme catalyses (S)-dihydroorotate + a quinone = orotate + a quinol. Its pathway is pyrimidine metabolism; UMP biosynthesis via de novo pathway; orotate from (S)-dihydroorotate (quinone route): step 1/1. Functionally, catalyzes the conversion of dihydroorotate to orotate with quinone as electron acceptor. This is Dihydroorotate dehydrogenase (quinone) from Yersinia enterocolitica serotype O:8 / biotype 1B (strain NCTC 13174 / 8081).